The chain runs to 165 residues: Endoribonuclease YbeY (165 aa).

Positions 130, 134, and 140 each coordinate Zn(2+).

Belongs to the endoribonuclease YbeY family. Zn(2+) is required as a cofactor.

Its subcellular location is the cytoplasm. Its function is as follows. Single strand-specific metallo-endoribonuclease involved in late-stage 70S ribosome quality control and in maturation of the 3' terminus of the 16S rRNA. This is Endoribonuclease YbeY from Streptococcus pneumoniae serotype 2 (strain D39 / NCTC 7466).